A 353-amino-acid chain; its full sequence is MKIIKAVPEEFLNGLYLIPTDRGNLLELDENGNFEVVNNIAIIRVLATPNLKKAIAKIVYQIKDKYYLFKNHKKANWLKNLLEYMNNKIEFDKYYRAKKAWYRGIGDLFRNIRKWEFEKVVGKIISLLKVLNPIVVFDVHDIRKWHYRKSFINFVKELRKNSISVVIRYPIDCHEEIREIFPEGILNTKATIRYFAKVHGYYISDRVAEYLLKITNGNLETIYLILRHSKREIKNLRELKIPWLRILPYIVDSKYRKLVEVIIELRKFKVEDITYKVNYKLSTIYRYLDELVELGILTKIKHKGKVRFKIRLNRNILLTLLKKSKNNYLHWFSIFLLDSIPWDIQIFEFSKSI.

This is an uncharacterized protein from Methanocaldococcus jannaschii (strain ATCC 43067 / DSM 2661 / JAL-1 / JCM 10045 / NBRC 100440) (Methanococcus jannaschii).